We begin with the raw amino-acid sequence, 162 residues long: UPF0114 protein PA4574 (162 aa).

Helical transmembrane passes span 10–32 (YASR…ALTI), 53–75 (LILV…MVMI), and 136–156 (LMWY…MGYL).

It belongs to the UPF0114 family.

It is found in the cell membrane. The polypeptide is UPF0114 protein PA4574 (Pseudomonas aeruginosa (strain ATCC 15692 / DSM 22644 / CIP 104116 / JCM 14847 / LMG 12228 / 1C / PRS 101 / PAO1)).